The primary structure comprises 142 residues: MEGGGGGLGGEPGLLQQILSLRLVPRVGNVTDCQRATLCSFPEMWYGVFLWALVSSLFFHIPAGLLALFTLRHHKYGRFMSVGIFLMGVLGPISAGILTSAAIAGVYKAAGKEMIPFEALVLGVGQTFCVLIVSFLRILATL.

Topologically, residues Met1 to Val48 are lumenal. N-linked (GlcNAc...) asparagine glycosylation is present at Asn29. A helical transmembrane segment spans residues Phe49–Phe69. Over Thr70 to Arg78 the chain is Cytoplasmic. Residues Phe79–Thr99 traverse the membrane as a helical segment. Residues Ser100 to Met114 lie on the Lumenal side of the membrane. The helical transmembrane segment at Ile115–Phe135 threads the bilayer. Residues Leu136–Leu142 are Cytoplasmic-facing.

It belongs to the TMEM170 family.

It localises to the endoplasmic reticulum membrane. Its subcellular location is the nucleus envelope. Functionally, may regulate membrane morphogenesis in the endoplasmic reticulum (ER) by promoting ER sheet formation at the expense of ER tubules. The sequence is that of Transmembrane protein 170A (tmem170a) from Xenopus laevis (African clawed frog).